The primary structure comprises 514 residues: MRAFLALIFLTFVMNVESSRPLMAFTPSHGWMNDPNGQFYDSKNELWHLYYQYNPNDTVWGTPLYWGHATSKDLSTWKDYGATIGPDRDEDGIFSGNIVVDHNNTSGFFNDSIDPRQRVVAIYTYNTEGSQTQHVAYSLDGGYTFEKYEHNPVLDVDNINFRDPKVFWHEPTNQWIMVIALSQQFKIQIYGSIDLTNWSLHSNFTGGLFGFQYECPGLIEVPVEGTDESKWVMFIAINPGSPLGGSSNQYFIGSFDGFEFVPDDSQARLMDYGKDFYAFQTFDNAPKESGVVGLAWASNWQYANLAPTKEWRSSMTLARQMTLASRNMNPETKVLSLLQKPIFGESVVAANKISKRNITGQDEQAVKIHKNSTGTFSFDITFSVDSSKNQTGQLQVISGQNGESIRAGFDPTAGQFFVDRGNTSGLKENPFFTDKTSAYVEPWKHQNDLPVYKMFGVIDGNLIEVFLNDGIATLTNTFFIPGTEGLEYLEIESSSDAIHIVESEVKELKLRATS.

An N-terminal signal peptide occupies residues 1 to 18 (MRAFLALIFLTFVMNVES). Residues 33–34 (ND) and glutamine 52 each bind substrate. The active-site Nucleophile is aspartate 34. A glycan (N-linked (GlcNAc...) asparagine) is linked at asparagine 56. Tryptophan 60 and serine 95 together coordinate substrate. 2 N-linked (GlcNAc...) asparagine glycosylation sites follow: asparagine 104 and asparagine 110. 162–163 (RD) is a binding site for substrate. Asparagine 197 and asparagine 203 each carry an N-linked (GlcNAc...) asparagine glycan. Residues glutamate 214 and tryptophan 300 each coordinate substrate. The active-site Proton donor/acceptor is the glutamate 214. N-linked (GlcNAc...) asparagine glycans are attached at residues asparagine 357, asparagine 371, asparagine 389, and asparagine 422.

This sequence belongs to the glycosyl hydrolase 32 family.

The protein resides in the secreted. It carries out the reaction Hydrolysis of terminal, non-reducing (2-&gt;1)- and (2-&gt;6)-linked beta-D-fructofuranose residues in fructans.. Exo-inulinase involved in utilization of the plant storage polymer inulin, consisting of fructooligosaccharides with a degree of polymerization (DP) value from 2 to 60. Splits off terminal fructose units successively from the non-reducing end of the inulin molecule. The polypeptide is Extracellular exo-inulinase (Meyerozyma guilliermondii (strain ATCC 6260 / CBS 566 / DSM 6381 / JCM 1539 / NBRC 10279 / NRRL Y-324) (Yeast)).